We begin with the raw amino-acid sequence, 265 residues long: UPF0026 protein slr1464 (265 aa).

The Radical SAM core domain occupies R16–A252. C32, C36, and C39 together coordinate [4Fe-4S] cluster. Residues R204 to P230 are disordered.

The protein belongs to the UPF0026 family. It depends on [4Fe-4S] cluster as a cofactor.

The chain is UPF0026 protein slr1464 from Synechocystis sp. (strain ATCC 27184 / PCC 6803 / Kazusa).